The primary structure comprises 358 residues: Ion-translocating oxidoreductase complex subunit D (358 aa).

A run of 3 helical transmembrane segments spans residues 24 to 44 (ILAM…GVVL), 79 to 99 (LTAL…IIII), and 125 to 145 (IGYV…MPPI). T186 bears the FMN phosphoryl threonine mark. Helical transmembrane passes span 220-240 (FAQG…FLIL), 248-268 (IPVA…FTGF), 271-291 (LSAI…FIAT), 297-317 (SITP…VYLI), and 321-341 (GNYP…VPLI).

It belongs to the NqrB/RnfD family. As to quaternary structure, the complex is composed of six subunits: RnfA, RnfB, RnfC, RnfD, RnfE and RnfG. FMN serves as cofactor.

It is found in the cell inner membrane. Its function is as follows. Part of a membrane-bound complex that couples electron transfer with translocation of ions across the membrane. The protein is Ion-translocating oxidoreductase complex subunit D of Haemophilus influenzae (strain ATCC 51907 / DSM 11121 / KW20 / Rd).